Here is a 493-residue protein sequence, read N- to C-terminus: Neuronal pentraxin receptor (493 aa).

Over 1–2 (MK) the chain is Cytoplasmic. Residues 3 to 23 (FLAVLLAAGMLAFLGAVICII) traverse the membrane as a helical; Signal-anchor for type II membrane protein segment. The Extracellular segment spans residues 24–493 (ASVPLAASPA…FDVCKGRAKA (470 aa)). The interval 37–72 (PGGTDNASAASAAGGSGPQRSLSALHSAGGSAGPSV) is disordered. An N-linked (GlcNAc...) asparagine glycan is attached at Asn42. A compositionally biased stretch (low complexity) spans 57-72 (SLSALHSAGGSAGPSV). N-linked (GlcNAc...) asparagine glycosylation occurs at Asn211. Positions 285–487 (DAFKVSIPIR…GAKKAAFDVC (203 aa)) constitute a Pentraxin (PTX) domain. Cys315 and Cys376 are oxidised to a cystine. Ca(2+) is bound by residues Asn340, Glu418, Gln419, Asp420, and Gln430. Asn456 carries N-linked (GlcNAc...) asparagine glycosylation.

In terms of assembly, heteropentamer with NPTX1 and/or NPTX2. Also binds taipoxin-associated calcium-binding protein 49 (TCBP49/RCN2). Interacts with KLHL2. It depends on Ca(2+) as a cofactor. Ubiquitinated by a cullin-RING-based BCR (BTB-CUL3-RBX1) E3 ubiquitin-protein ligase complex containing KLHL2.

The protein resides in the membrane. May be involved in mediating uptake of synaptic material during synapse remodeling or in mediating the synaptic clustering of AMPA glutamate receptors at a subset of excitatory synapses. This Mus musculus (Mouse) protein is Neuronal pentraxin receptor (Nptxr).